Reading from the N-terminus, the 407-residue chain is Guanine nucleotide-binding protein alpha-1 subunit (407 aa).

Gly2 carries N-myristoyl glycine lipidation. Cys3 is lipidated: S-palmitoyl cysteine. The G-alpha domain occupies 73–407 (NDIKVLLLGA…MSNNLQSLMF (335 aa)). Residues 76-89 (KVLLLGAGDSGKTT) are G1 motif. GTP contacts are provided by Asp84, Ser85, Gly86, Lys87, Thr88, Thr89, Asp190, Leu215, Thr221, Gly243, Asn309, Lys310, Asp312, and Ala380. Thr88 provides a ligand contact to Mg(2+). The interval 213–221 (DILHCRIKT) is G2 motif. Thr221 serves as a coordination point for Mg(2+). The segment at 236-245 (YRFFDVGGQR) is G3 motif. The G4 motif stretch occupies residues 305–312 (ILFLNKLD). Residues 378–383 (TTATDT) are G5 motif.

Belongs to the G-alpha family. G(q) subfamily. In terms of assembly, g proteins are composed of 3 units; alpha, beta and gamma. The alpha chain contains the guanine nucleotide binding site. Mg(2+) is required as a cofactor.

In terms of biological role, implicated in the mating and sporulation pathway. Probably coupled to mating-factor receptors. May act in concert with Ras1. The polypeptide is Guanine nucleotide-binding protein alpha-1 subunit (gpa1) (Schizosaccharomyces pombe (strain 972 / ATCC 24843) (Fission yeast)).